Consider the following 509-residue polypeptide: Dihydrolipoyl dehydrogenase, mitochondrial (509 aa).

The transit peptide at 1–35 (MQSWSRVYCSLAKKGHFNRLSHGLQGASSVPLRTY) directs the protein to the mitochondrion. Lys66 carries the post-translational modification N6-acetyllysine; alternate. N6-succinyllysine; alternate is present on Lys66. FAD-binding positions include 71–80 (EKNETLGGTC) and Lys89. The cysteines at positions 80 and 85 are disulfide-linked. Residues Lys104, Lys122, Lys132, and Lys143 each carry the N6-acetyllysine; alternate modification. Lys104, Lys122, Lys132, and Lys143 each carry N6-succinyllysine; alternate. Gly154 provides a ligand contact to FAD. Lys159 is subject to N6-succinyllysine. 183–185 (TGS) lines the FAD pocket. NAD(+) is bound by residues 220–227 (GAGVIGVE) and Glu243. N6-succinyllysine occurs at positions 273 and 277. NAD(+) is bound at residue Val278. Phosphoserine occurs at positions 285 and 297. Gly314 lines the NAD(+) pocket. Position 346 is an N6-acetyllysine (Lys346). Residues Asp355 and 361-364 (MLAH) each bind FAD. An N6-acetyllysine; alternate modification is found at Lys410. Lys410 is subject to N6-succinyllysine; alternate. 2 positions are modified to N6-acetyllysine: Lys417 and Lys420. Lys430 carries the post-translational modification N6-succinyllysine. Residue His487 is the Proton acceptor of the active site. Ser502 carries the phosphoserine modification. Residue Lys505 is modified to N6-acetyllysine; alternate. An N6-succinyllysine; alternate modification is found at Lys505.

This sequence belongs to the class-I pyridine nucleotide-disulfide oxidoreductase family. Homodimer. Part of the multimeric pyruvate dehydrogenase complex that contains multiple copies of pyruvate dehydrogenase (subunits PDHA (PDHA1 or PDHA2) and PDHB, E1), dihydrolipoamide acetyltransferase (DLAT, E2) and lipoamide dehydrogenase (DLD, E3). These subunits are bound to an inner core composed of about 48 DLAT and 12 PDHX molecules (by non covalent bonds). The 2-oxoglutarate dehydrogenase complex is composed of OGDH (2-oxoglutarate dehydrogenase; E1), DLST (dihydrolipoamide succinyltransferase; E2), DLD (dihydrolipoamide dehydrogenase; E3) and the assembly factor KGD4. It contains multiple copies of the three enzymatic components (E1, E2 and E3). In the nucleus, the 2-oxoglutarate dehydrogenase complex associates with KAT2A. Interacts with PDHX. FAD serves as cofactor. In terms of processing, tyrosine phosphorylated.

The protein resides in the mitochondrion matrix. It is found in the nucleus. The protein localises to the cell projection. It localises to the cilium. Its subcellular location is the flagellum. The protein resides in the cytoplasmic vesicle. It is found in the secretory vesicle. The protein localises to the acrosome. The enzyme catalyses N(6)-[(R)-dihydrolipoyl]-L-lysyl-[protein] + NAD(+) = N(6)-[(R)-lipoyl]-L-lysyl-[protein] + NADH + H(+). Its function is as follows. Lipoamide dehydrogenase is a component of the glycine cleavage system as well as an E3 component of three alpha-ketoacid dehydrogenase complexes (pyruvate-, alpha-ketoglutarate-, and branched-chain amino acid-dehydrogenase complex). The 2-oxoglutarate dehydrogenase complex is mainly active in the mitochondrion. A fraction of the 2-oxoglutarate dehydrogenase complex also localizes in the nucleus and is required for lysine succinylation of histones: associates with KAT2A on chromatin and provides succinyl-CoA to histone succinyltransferase KAT2A. In monomeric form may have additional moonlighting function as serine protease. Involved in the hyperactivation of spermatazoa during capacitation and in the spermatazoal acrosome reaction. The polypeptide is Dihydrolipoyl dehydrogenase, mitochondrial (Dld) (Rattus norvegicus (Rat)).